Reading from the N-terminus, the 346-residue chain is Annexin A1 (346 aa).

N-acetylalanine is present on Ala-2. A Phosphoserine; by TRPM7 modification is found at Ser-5. An Isoglutamyl lysine isopeptide (Gln-Lys) (interchain with K-?) cross-link involves residue Gln-19. Tyr-21 carries the phosphotyrosine; by EGFR modification. Ser-27 is modified (phosphoserine; by PKC). Phosphoserine is present on residues Ser-34 and Ser-37. 4 Annexin repeats span residues 42-113, 114-185, 197-269, and 273-344; these read FNPS…AMLK, TPAQ…ALAK, DLAD…TIVK, and STPA…ALCG. Lys-58 is subject to N6-acetyllysine. 11 residues coordinate Ca(2+): Gly-59, Val-60, Glu-62, Lys-97, Leu-100, Glu-105, Met-127, Gly-129, Gly-131, Thr-132, and Glu-134. Phosphothreonine is present on Thr-136. Residues Asp-171, Gly-210, and Arg-213 each coordinate Ca(2+). A Glycyl lysine isopeptide (Lys-Gly) (interchain with G-Cter in SUMO1); alternate cross-link involves residue Lys-214. Residue Lys-214 forms a Glycyl lysine isopeptide (Lys-Gly) (interchain with G-Cter in SUMO2); alternate linkage. The Ca(2+) site is built by Gly-215, Asp-253, Glu-255, and Leu-256. Lys-257 is covalently cross-linked (Glycyl lysine isopeptide (Lys-Gly) (interchain with G-Cter in SUMO1)). Glu-261, Met-286, Gly-288, and Gly-290 together coordinate Ca(2+). Lys-312 is modified (N6-acetyllysine). Cys-324 and Cys-343 are oxidised to a cystine. Ca(2+) contacts are provided by Leu-328, Glu-330, and Thr-331. Lys-332 is covalently cross-linked (Glycyl lysine isopeptide (Lys-Gly) (interchain with G-Cter in SUMO1)). Position 336 (Glu-336) interacts with Ca(2+).

Belongs to the annexin family. Homodimer; non-covalently linked. Homodimer; linked by transglutamylation. Homodimers linked by transglutamylation are observed in placenta, but not in other tissues. Interacts with S100A11. Heterotetramer, formed by two molecules each of S100A11 and ANXA1. Interacts with DYSF. Interacts with EGFR. Phosphorylated by protein kinase C, EGFR and TRPM7. Phosphorylated in response to EGF treatment. Post-translationally, sumoylated. In terms of processing, proteolytically cleaved by cathepsin CTSG to release the active N-terminal peptide Ac2-26. In terms of tissue distribution, detected in eosinophils. Detected in lung, placenta, spleen and thymus (at protein level).

It localises to the nucleus. Its subcellular location is the cytoplasm. The protein resides in the cell projection. It is found in the cilium. The protein localises to the basolateral cell membrane. It localises to the lateral cell membrane. Its subcellular location is the cell membrane. The protein resides in the apical cell membrane. It is found in the membrane. The protein localises to the endosome membrane. It localises to the secreted. Its subcellular location is the extracellular space. The protein resides in the early endosome. It is found in the cytoplasmic vesicle membrane. The protein localises to the extracellular exosome. It localises to the cytoplasmic vesicle. Its subcellular location is the secretory vesicle lumen. The protein resides in the phagocytic cup. Plays important roles in the innate immune response as effector of glucocorticoid-mediated responses and regulator of the inflammatory process. Has anti-inflammatory activity. Plays a role in glucocorticoid-mediated down-regulation of the early phase of the inflammatory response. Contributes to the adaptive immune response by enhancing signaling cascades that are triggered by T-cell activation, regulates differentiation and proliferation of activated T-cells. Promotes the differentiation of T-cells into Th1 cells and negatively regulates differentiation into Th2 cells. Has no effect on unstimulated T-cells. Negatively regulates hormone exocytosis via activation of the formyl peptide receptors and reorganization of the actin cytoskeleton. Has high affinity for Ca(2+) and can bind up to eight Ca(2+) ions. Displays Ca(2+)-dependent binding to phospholipid membranes. Plays a role in the formation of phagocytic cups and phagosomes. Plays a role in phagocytosis by mediating the Ca(2+)-dependent interaction between phagosomes and the actin cytoskeleton. Its function is as follows. Functions at least in part by activating the formyl peptide receptors and downstream signaling cascades. Promotes chemotaxis of granulocytes and monocytes via activation of the formyl peptide receptors. Promotes rearrangement of the actin cytoskeleton, cell polarization and cell migration. Promotes resolution of inflammation and wound healing. Acts via neutrophil N-formyl peptide receptors to enhance the release of CXCL2. This is Annexin A1 (Anxa1) from Rattus norvegicus (Rat).